A 751-amino-acid chain; its full sequence is MALTDSKKKATSKRKRDEPEQEQTHTLTSQLEMLTDEEGDDDNAGDVSDDGEYDEFPEIDAESDSEEEDEEEDEEDEEDEPDISDEEDSDSDESLHVFPKAKTVVSDITGQQKRVYPEIEPDYDSDSSTEDSPNRVGNVPMHWYDDLPHIGYDINGKRVLRPAKGDELDKFLATIEDPDSWTSAFDKKMQMDKPLTSEELDIIQRLYAGENPDATYDPYEPMVEWFTGKGKEEIMPLSAAPEPKRRWVRSKWEKQKIMKIVRAIRQGRIVPNKPKTSSKQFEFYSIWSSEPSSSQPPPLPAPKRPLPTNAESYNPPEEYLPTEEEKQEWLKQDPEDRERDFLPQKFSSLRHVPAYDQFIKERFNRQLDLYLAPRIQRVKLNIDPNSLIPKLPSPSSLKPFPNYRSLLFTHPKGRARCVSVSPDGAWAVSGDEDGVVSLWEVNVGCEIRRWKFEGKIGSLEWCPRADACYFAVGIEETIHFLIPPNLDPTVLALTQTLLAPSTLPPAPATPSAVKWSSSSLSSWSVEQPILSLNLPPSSGLPTQISWHKKGDYIATVSSGGAQNGVWIHQFTRRHSQAPFKKIKGAVQQVLFHPIKPHFFVATQQYVRLYNLAEQKLIKTLQPGIRWISSMDVHPSGDHVIVGGYDRKLCWFDLELSEKPYKVLRYHSRAIRSLHFHPTYPLFASSSDDGSIQIFHARVYNDLMTDPLIVPLKILRGHQITDGLGILQVKWTPKHPWLLSAAADGTVAVWCS.

2 disordered regions span residues 1 to 140 and 289 to 336; these read MALT…GNVP and SEPS…DPED. Composition is skewed to acidic residues over residues 34–92 and 119–129; these read LTDE…SDSD and IEPDYDSDSST. Positions 294–305 are enriched in pro residues; the sequence is SQPPPLPAPKRP. Basic and acidic residues predominate over residues 323-336; it reads EEEKQEWLKQDPED. WD repeat units follow at residues 410–449, 536–580, 582–621, 622–661, 665–704, and 720–751; these read HPKGRARCVSVSPDGAWAVSGDEDGVVSLWEVNVGCEIRR, PSSG…APFK, IKGAVQQVLFHPIKPHFFVATQQYVRLYNLAEQKLIKTLQ, PGIRWISSMDVHPSGDHVIVGGYDRKLCWFDLELSEKPYK, YHSRAIRSLHFHPTYPLFASSSDDGSIQIFHARVYNDLMT, and TDGLGILQVKWTPKHPWLLSAAADGTVAVWCS.

The protein belongs to the WD repeat BOP1/ERB1 family. Component of the NOP7 complex, composed of ERB1, NOP7 and YTM1. The complex is held together by ERB1, which interacts with NOP7 via its N-terminal domain and with YTM1 via a high-affinity interaction between the seven-bladed beta-propeller domains of the 2 proteins. The NOP7 complex associates with the 66S pre-ribosome.

It localises to the nucleus. The protein resides in the nucleolus. The protein localises to the nucleoplasm. Component of the NOP7 complex, which is required for maturation of the 25S and 5.8S ribosomal RNAs and formation of the 60S ribosome. This Coprinopsis cinerea (strain Okayama-7 / 130 / ATCC MYA-4618 / FGSC 9003) (Inky cap fungus) protein is Ribosome biogenesis protein ERB1.